Consider the following 200-residue polypeptide: LexA repressor (200 aa).

Positions Arg-28–Lys-48 form a DNA-binding region, H-T-H motif. Residues Ser-118 and Lys-155 each act as for autocatalytic cleavage activity in the active site.

The protein belongs to the peptidase S24 family. As to quaternary structure, homodimer.

The catalysed reaction is Hydrolysis of Ala-|-Gly bond in repressor LexA.. Represses a number of genes involved in the response to DNA damage (SOS response), including recA and lexA. In the presence of single-stranded DNA, RecA interacts with LexA causing an autocatalytic cleavage which disrupts the DNA-binding part of LexA, leading to derepression of the SOS regulon and eventually DNA repair. This is LexA repressor from Teredinibacter turnerae (strain ATCC 39867 / T7901).